Reading from the N-terminus, the 168-residue chain is Cell division inhibitor SulA (168 aa).

The segment at 105–111 is ftsZ binding; sequence ALETGNY. Residues 161 to 168 form a lon protease binding region; that stretch reads RIHSRMVH.

Belongs to the SulA family. As to quaternary structure, interacts with FtsZ. Post-translationally, is rapidly cleaved and degraded by the Lon protease once DNA damage is repaired.

Component of the SOS system and an inhibitor of cell division. Accumulation of SulA causes rapid cessation of cell division and the appearance of long, non-septate filaments. In the presence of GTP, binds a polymerization-competent form of FtsZ in a 1:1 ratio, thus inhibiting FtsZ polymerization and therefore preventing it from participating in the assembly of the Z ring. This mechanism prevents the premature segregation of damaged DNA to daughter cells during cell division. This chain is Cell division inhibitor SulA, found in Cronobacter turicensis (strain DSM 18703 / CCUG 55852 / LMG 23827 / z3032).